Reading from the N-terminus, the 345-residue chain is Phosphoribosylformylglycinamidine cyclo-ligase (345 aa).

It belongs to the AIR synthase family. In terms of assembly, homodimer.

It is found in the cytoplasm. It catalyses the reaction 2-formamido-N(1)-(5-O-phospho-beta-D-ribosyl)acetamidine + ATP = 5-amino-1-(5-phospho-beta-D-ribosyl)imidazole + ADP + phosphate + H(+). It functions in the pathway purine metabolism; IMP biosynthesis via de novo pathway; 5-amino-1-(5-phospho-D-ribosyl)imidazole from N(2)-formyl-N(1)-(5-phospho-D-ribosyl)glycinamide: step 2/2. The protein is Phosphoribosylformylglycinamidine cyclo-ligase of Escherichia coli O157:H7.